The sequence spans 233 residues: 2,3-bisphosphoglycerate-dependent phosphoglycerate mutase (233 aa).

Residues 8–15 (RHGESEWN), 21–22 (TG), Arg-60, 87–90 (ERHY), Lys-98, 114–115 (RR), and 183–184 (GN) contribute to the substrate site. His-9 functions as the Tele-phosphohistidine intermediate in the catalytic mechanism. Glu-87 (proton donor/acceptor) is an active-site residue.

The protein belongs to the phosphoglycerate mutase family. BPG-dependent PGAM subfamily.

It carries out the reaction (2R)-2-phosphoglycerate = (2R)-3-phosphoglycerate. The protein operates within carbohydrate degradation; glycolysis; pyruvate from D-glyceraldehyde 3-phosphate: step 3/5. Functionally, catalyzes the interconversion of 2-phosphoglycerate and 3-phosphoglycerate. The chain is 2,3-bisphosphoglycerate-dependent phosphoglycerate mutase from Lactococcus lactis subsp. cremoris (strain MG1363).